A 511-amino-acid polypeptide reads, in one-letter code: MARLALLSVSDKSGIVELAQRLVNEFQFDLISSGGTAKTLKEAGVPVTKVSDYTGAPEILGGRVKTLHPRIHGGILARRDLPSDQADLEANDIRPLDLVVVNLYPFEQTIAKPGVTVAEAVEQIDIGGPAMIRATAKNFAHTTVLTNPNQYEAYLQALQEQGEIPLALRQQFAGEAFALTNAYDQAIANYFSGLSGDSANQFGLSGTLRQPLRYGENPHQSAGWYQTGREATGWAKAEKLQGKELSYNNLVDLEAARRIINEFDVREPAAVILKHTNPCGVALAPTLVEAYQKAFNADATSAFGGIVALNQPLDGPTAAAMVKTFLECIVAPGCDAEAQEILAKKNNLRVLILPDLATGPSQTIKAIAGGFLVQSADDEREDPSTWQVVTEKQPSGEELAELAFAWKVCKHVKSNAITITKNKTTLGVGAGQMNRVGSVEIALKQAGTEAQGACLASDAFFPFDDSVRTAAAAGITTIIQPGGSMRDQDSIQAANELGLVMIFTGVRHFLH.

The MGS-like domain maps to 1–146 (MARLALLSVS…KNFAHTTVLT (146 aa)).

Belongs to the PurH family.

It carries out the reaction (6R)-10-formyltetrahydrofolate + 5-amino-1-(5-phospho-beta-D-ribosyl)imidazole-4-carboxamide = 5-formamido-1-(5-phospho-D-ribosyl)imidazole-4-carboxamide + (6S)-5,6,7,8-tetrahydrofolate. The catalysed reaction is IMP + H2O = 5-formamido-1-(5-phospho-D-ribosyl)imidazole-4-carboxamide. It functions in the pathway purine metabolism; IMP biosynthesis via de novo pathway; 5-formamido-1-(5-phospho-D-ribosyl)imidazole-4-carboxamide from 5-amino-1-(5-phospho-D-ribosyl)imidazole-4-carboxamide (10-formyl THF route): step 1/1. Its pathway is purine metabolism; IMP biosynthesis via de novo pathway; IMP from 5-formamido-1-(5-phospho-D-ribosyl)imidazole-4-carboxamide: step 1/1. The protein is Bifunctional purine biosynthesis protein PurH of Synechocystis sp. (strain ATCC 27184 / PCC 6803 / Kazusa).